The primary structure comprises 603 residues: Peroxisomal targeting signal receptor (603 aa).

A Glycyl cysteine thioester (Cys-Gly) (interchain with G-Cter in ubiquitin) cross-link involves residue Cys10. Positions 11–33 (SANSNAIAQFNKHTQQDRSLQRQ) are amphipathic helix 1 (AH1). Lys22 is covalently cross-linked (Glycyl lysine isopeptide (Lys-Gly) (interchain with G-Cter in ubiquitin)). The interval 23–49 (HTQQDRSLQRQAANQQGIVQNGQGFKK) is disordered. A compositionally biased stretch (polar residues) spans 31–45 (QRQAANQQGIVQNGQ). Positions 58-76 (RQNMDQFMNNGPSQSNFQF) are amphipathic helix 2 (AH2). Short sequence motifs (wxxxF/Y motif) lie at residues 99–103 (WTNEF), 128–132 (WATEF), and 192–196 (WDNQF). The interval 232–248 (FQEVWDSLNSEEVENDF) is amphipathic helix 4 (AH4). The WxxxF/Y motif 4 motif lies at 271–275 (WEKDF). TPR repeat units lie at residues 304-338 (ESDPYEIGLQLMENGAKLSEAALAFEAAIQRNEGH), 339-372 (INAWLKLGEVQTQNEKEIAGISALEKCLELHPEN), 449-482 (PDVQMGLGVLFYANEDFDKTIDCFKAALSIKPDD), 484-516 (VLWNRLGASLANSNRSEEAVDAYFKALELKPTF), and 518-550 (RARYNLGVSCINIGCYKEAAEHLLSGLSMHQVE).

This sequence belongs to the peroxisomal targeting signal receptor family. In terms of assembly, interacts (via WxxxF/Y and LVxEF motifs) with PEX14; promoting translocation through the PEX13-PEX14 docking complex. Monoubiquitinated at Cys-10 by PEX2 during PEX5 passage through the retrotranslocation channel: monoubiquitination acts as a signal for PEX5 extraction and is required for proper export from peroxisomes and recycling. When PEX5 recycling is compromised, polyubiquitinated at Lys-22 by PEX10 during its passage through the retrotranslocation channel, leading to its degradation.

The protein localises to the cytoplasm. The protein resides in the cytosol. Its subcellular location is the peroxisome matrix. Functionally, receptor that mediates peroxisomal import of proteins containing a C-terminal PTS1-type tripeptide peroxisomal targeting signal (SKL-type). Binds to cargo proteins containing a PTS1 peroxisomal targeting signal in the cytosol, and translocates them into the peroxisome matrix by passing through the PEX13-PEX14 docking complex along with cargo proteins. PEX5 receptor is then retrotranslocated into the cytosol, leading to release of bound cargo in the peroxisome matrix, and reset for a subsequent peroxisome import cycle. The polypeptide is Peroxisomal targeting signal receptor (PEX5) (Debaryomyces hansenii (strain ATCC 36239 / CBS 767 / BCRC 21394 / JCM 1990 / NBRC 0083 / IGC 2968) (Yeast)).